A 402-amino-acid polypeptide reads, in one-letter code: Propionate kinase (402 aa).

Asparagine 11 and lysine 18 together coordinate ATP. A Mg(2+)-binding site is contributed by asparagine 11. Arginine 86 serves as a coordination point for substrate. Aspartate 143 serves as the catalytic Proton donor/acceptor. Residues histidine 175, 203–207 (HLGNG), 278–280 (DLR), and 326–330 (GIGEN) contribute to the ATP site.

The protein belongs to the acetokinase family. TdcD subfamily. In terms of assembly, homodimer. Mg(2+) is required as a cofactor.

It catalyses the reaction propanoate + ATP = propanoyl phosphate + ADP. It participates in amino-acid degradation; L-threonine degradation via propanoate pathway; propanoate from L-threonine: step 4/4. Its function is as follows. Catalyzes the conversion of propionyl phosphate and ADP to propionate and ATP. This chain is Propionate kinase, found in Salmonella agona (strain SL483).